The chain runs to 111 residues: Cytochrome c6 (111 aa).

Positions 1–25 are cleaved as a signal peptide; the sequence is MKKIFSLVLLGIALFTFAFSSPALA. Positions 39, 42, 43, and 83 each coordinate heme c.

The protein belongs to the cytochrome c family. PetJ subfamily. Monomer. In terms of processing, binds 1 heme c group covalently per subunit.

The protein localises to the cellular thylakoid lumen. Functionally, functions as an electron carrier between membrane-bound cytochrome b6-f and photosystem I in oxygenic photosynthesis. The sequence is that of Cytochrome c6 (petJ) from Nostoc sp. (strain PCC 7120 / SAG 25.82 / UTEX 2576).